We begin with the raw amino-acid sequence, 224 residues long: LexA repressor (224 aa).

Residues 31-51 (RAEIATELGFRSANAAEEHLQ) constitute a DNA-binding region (H-T-H motif). Residues serine 142 and lysine 179 each act as for autocatalytic cleavage activity in the active site.

This sequence belongs to the peptidase S24 family. In terms of assembly, homodimer.

The catalysed reaction is Hydrolysis of Ala-|-Gly bond in repressor LexA.. Functionally, represses a number of genes involved in the response to DNA damage (SOS response), including recA and lexA. In the presence of single-stranded DNA, RecA interacts with LexA causing an autocatalytic cleavage which disrupts the DNA-binding part of LexA, leading to derepression of the SOS regulon and eventually DNA repair. The protein is LexA repressor of Albidiferax ferrireducens (strain ATCC BAA-621 / DSM 15236 / T118) (Rhodoferax ferrireducens).